Consider the following 378-residue polypeptide: MNIWLSMLTTTGLGAIIGGFTNHLAIKMLFRPHRPMYIGKFQVPFTPGLIPKRRDELAVQLGKMVVEHLLTPEGIGKKLTNEEFQKGLIHWAQVEVDKVITNEQSLRHMLGKWDVAHVEKEATEKIEQVITEKIQAFLEEYYTYTWEQALPHSVHEKIENAIPNVSAFILKRAIHFFESEEGKSRLSKMIDDFFASRGALLNLVGMFLGNVSVVDRVQPEVIKFLGQDGTKQLLTDVLQKEWEKLKGRDVKELETFVEKEMIVSSILSAVKVEETVSKFLNQSVKQVCEPVRETIIEKVVPKAVTKGLKWGGENVESILNNLHLAEIVQQEVSTFSTERLEDLVLSITKNELKMITYLGALLGGMIGIVQGLLLLFLK.

The next 2 helical transmembrane spans lie at 1–21 and 357–377; these read MNIWLSMLTTTGLGAIIGGFT and YLGALLGGMIGIVQGLLLLFL.

This sequence belongs to the UPF0754 family.

The protein resides in the cell membrane. The chain is UPF0754 membrane protein BCE33L0760 from Bacillus cereus (strain ZK / E33L).